Reading from the N-terminus, the 303-residue chain is HTH-type transcriptional regulator LinR (303 aa).

The HTH lysR-type domain maps to 6–63; that stretch reads LDFRHLVLLDALLKRHSVSAAARELDLPQPTASHGLARLRKALGDPLLVRARDGMEPT. Positions 23 to 42 form a DNA-binding region, H-T-H motif; sequence VSAAARELDLPQPTASHGLA.

Belongs to the LysR transcriptional regulatory family.

Positively regulates the transcription of the linD and linE genes that are involved in gamma-hexachlorocyclohexane (gamma-HCH or lindane) degradation. This degradation pathway allows S.japonicum UT26 to grow on gamma-HCH as the sole source of carbon and energy. The sequence is that of HTH-type transcriptional regulator LinR (linR) from Sphingobium indicum (strain DSM 16413 / CCM 7287 / MTCC 6362 / UT26 / NBRC 101211 / UT26S) (Sphingobium japonicum).